We begin with the raw amino-acid sequence, 913 residues long: Proline and serine-rich protein 1 (913 aa).

M1 is subject to N-acetylmethionine. Disordered regions lie at residues 233–291, 488–507, 592–618, and 888–913; these read VPPP…PAVS, ASLS…ATNK, SEPT…TLGL, and DGFP…SGWQ. The span at 251–275 shows a compositional bias: polar residues; it reads LSSQSKPTQSQTFSTPASQLFSPHG. Residues 276 to 291 show a composition bias toward low complexity; it reads SSNPSTPAATPVPAVS. A compositionally biased stretch (polar residues) spans 488 to 506; it reads ASLSSLPNRNSDSPASATN. Residues 893-913 show a composition bias toward polar residues; sequence YPSTPGTPFSLQTGLSQSGWQ.

In terms of assembly, interacts with TET2 and OGT; this interaction mediates TET2 O-GlcNAcylation and stability by promoting the interaction between OGT and TET2. Interacts with KDM6A. Interacts with TET1. Post-translationally, glycosylated. Interaction with OGT leads to GlcNAcylation.

Its function is as follows. Mediates OGT interaction with and O-GlcNAcylation of TET2 to control TET2 stabilization at enhancers and CpG islands (CGIs). This Mus musculus (Mouse) protein is Proline and serine-rich protein 1.